Here is a 718-residue protein sequence, read N- to C-terminus: Catalase-peroxidase (718 aa).

A cross-link (tryptophyl-tyrosyl-methioninium (Trp-Tyr) (with M-245)) is located at residues 98–219; sequence WHAAGTYRMG…LAATEMGLIY (122 aa). His99 (proton acceptor) is an active-site residue. The segment at residues 219–245 is a cross-link (tryptophyl-tyrosyl-methioninium (Tyr-Met) (with W-98)); it reads YVNPEGPQASGDPRSAAPFIRATFGNM. Position 260 (His260) interacts with heme b.

This sequence belongs to the peroxidase family. Peroxidase/catalase subfamily. Homodimer or homotetramer. Heme b serves as cofactor. Post-translationally, formation of the three residue Trp-Tyr-Met cross-link is important for the catalase, but not the peroxidase activity of the enzyme.

The catalysed reaction is H2O2 + AH2 = A + 2 H2O. It catalyses the reaction 2 H2O2 = O2 + 2 H2O. Bifunctional enzyme with both catalase and broad-spectrum peroxidase activity. This chain is Catalase-peroxidase, found in Acinetobacter baumannii (strain AB307-0294).